A 434-amino-acid polypeptide reads, in one-letter code: MAEKSFKYIILGGGVSAGYAAKEFANQGVQPGELAVISKEAVAPYERPALSKGYLFPEGAARLPGFHCCVGSGGEKLLPESYKQKGIELILSTEIVKADLSAKSLVSATGDVFKYQTLIIATGSTVLRLTDFGVKGADSKNILYLREIDDADKLVEAIKAKKGGKAVVVGGGYIGLELSAVLRINNLDVTMVFPEPWCMPRLFTADIAAFYETYYTNKGVKIIKGTVASGFTAQPNGEVKEVQLKDGRTLEADIVIVGVGAKPLTSLFKGQVEEDKGGIKTDAFFKTSVPDVYAVGDVATFPLKMYGDVRRVEHVDHSRKSAEQAVKAIKAAEGGAAVEEYDYLPFFYSRSFDLSWQFYGDNVGDSVLFGDSNPSNPKPRFGAYWVQGGKVVGAFMEGGSGDENKALAKVAKARPSAESLDELVKQGISFAAKI.

Residues G13 to S16, E40, R47, K52, I95, and R146 to E147 each bind FAD. NAD(+)-binding positions include G171–E177, E195, R201, and G260. Y173–E177 is a binding site for NADP(+). R201 and G260 together coordinate NADP(+). An FAD-binding site is contributed by D297. E313–H314 is an NAD(+) binding site. NADP(+) is bound at residue E313–H314. Position 315 (V315) interacts with FAD. Residue R319 coordinates L-ascorbate. Y348 provides a ligand contact to FAD. Y348 lines the NAD(+) pocket. Position 348 (Y348) interacts with NADP(+). Position 350 (R350) interacts with L-ascorbate. S416 is subject to Phosphoserine.

Belongs to the FAD-dependent oxidoreductase family. Requires FAD as cofactor.

The protein localises to the peroxisome matrix. It catalyses the reaction 2 monodehydro-L-ascorbate radical + NADH + H(+) = 2 L-ascorbate + NAD(+). Its function is as follows. Catalyzes the conversion of monodehydroascorbate to ascorbate, oxidizing NADH in the process. The sequence is that of Monodehydroascorbate reductase 1, peroxisomal from Arabidopsis thaliana (Mouse-ear cress).